Here is a 589-residue protein sequence, read N- to C-terminus: Bifunctional protein TrpGD (589 aa).

The 196-residue stretch at R46–K241 folds into the Glutamine amidotransferase type-1 domain. An L-glutamine-binding site is contributed by G99–G101. C126 (nucleophile; for GATase activity) is an active-site residue. L-glutamine contacts are provided by residues Q130 and S176 to L177. Catalysis depends on for GATase activity residues H215 and E217. Residues A253–S589 are anthranilate phosphoribosyltransferase.

It in the C-terminal section; belongs to the anthranilate phosphoribosyltransferase family. Heterotetramer consisting of two non-identical subunits: a beta subunit (TrpG) and a large alpha subunit (TrpE).

The enzyme catalyses chorismate + L-glutamine = anthranilate + pyruvate + L-glutamate + H(+). The catalysed reaction is N-(5-phospho-beta-D-ribosyl)anthranilate + diphosphate = 5-phospho-alpha-D-ribose 1-diphosphate + anthranilate. It participates in amino-acid biosynthesis; L-tryptophan biosynthesis; L-tryptophan from chorismate: step 1/5. Its pathway is amino-acid biosynthesis; L-tryptophan biosynthesis; L-tryptophan from chorismate: step 2/5. Part of a heterotetrameric complex that catalyzes the two-step biosynthesis of anthranilate, an intermediate in the biosynthesis of L-tryptophan. In the first step, the glutamine-binding beta subunit (TrpG) of anthranilate synthase (AS) provides the glutamine amidotransferase activity which generates ammonia as a substrate that, along with chorismate, is used in the second step, catalyzed by the large alpha subunit of AS (TrpE) to produce anthranilate. In the absence of TrpG, TrpE can synthesize anthranilate directly from chorismate and high concentrations of ammonia. In addition to synthesizing anthranilate, it also catalyzes the second step of the pathway, the transfer of the phosphoribosyl group of 5-phosphorylribose-1-pyrophosphate (PRPP) to anthranilate. The chain is Bifunctional protein TrpGD (trpGD) from Thermotoga maritima (strain ATCC 43589 / DSM 3109 / JCM 10099 / NBRC 100826 / MSB8).